A 450-amino-acid polypeptide reads, in one-letter code: Phosphoglucosamine mutase (450 aa).

Residue serine 107 is the Phosphoserine intermediate of the active site. 4 residues coordinate Mg(2+): serine 107, aspartate 246, aspartate 248, and aspartate 250. A Phosphoserine modification is found at serine 107.

The protein belongs to the phosphohexose mutase family. Mg(2+) is required as a cofactor. Post-translationally, activated by phosphorylation.

It catalyses the reaction alpha-D-glucosamine 1-phosphate = D-glucosamine 6-phosphate. Functionally, catalyzes the conversion of glucosamine-6-phosphate to glucosamine-1-phosphate. The protein is Phosphoglucosamine mutase of Aromatoleum aromaticum (strain DSM 19018 / LMG 30748 / EbN1) (Azoarcus sp. (strain EbN1)).